The chain runs to 184 residues: Helix-loop-helix protein ngn-1 (184 aa).

Residues 1–55 are disordered; it reads MYHHSPFYPHHLQTGEQDLDMERENDMDQNSKNSTQKPVKREKRRYRCRKRSPAT. Polar residues predominate over residues 28–37; it reads DQNSKNSTQK. Residues 38 to 52 are compositionally biased toward basic residues; that stretch reads PVKREKRRYRCRKRS. Residues 62–75 form a basic motif region; the sequence is VRRDKANARERRRM. The bHLH domain maps to 62-114; sequence VRRDKANARERRRMNSLNDALEHLRGILPALPDEPKMTKIETLRKAQEYIASL. A helix-loop-helix motif region spans residues 76–114; the sequence is NSLNDALEHLRGILPALPDEPKMTKIETLRKAQEYIASL. The interval 164–184 is disordered; it reads SNPPSQMYYHHHHQSPSFPHH. Basic residues predominate over residues 172 to 184; sequence YHHHHQSPSFPHH.

Interacts with hlh-2; the interaction is direct.

Its subcellular location is the nucleus. In terms of biological role, acts as a transcriptional regulator. Regulates expression of various genes, including homeobox protein unc-42 and helix-loop-helix protein hlh-34. Required for embryonic viability, neuromuscular development, organization of the nerve ring and neuronal cell body location. Regulates AIY neuron axon morphology and cell fate. Plays a role in cell autonomously establishing a neuronal left-right asymmetry. Involved in regulating glial specification. This chain is Helix-loop-helix protein ngn-1, found in Caenorhabditis elegans.